Reading from the N-terminus, the 504-residue chain is Probable phenylalanine--tRNA ligase beta subunit (504 aa).

A B5 domain is found at 270-346 (IKDKSYLLSI…ICYGFNNINM (77 aa)). Aspartate 324, aspartate 330, glutamate 333, and aspartate 334 together coordinate Mg(2+).

Belongs to the phenylalanyl-tRNA synthetase beta subunit family. Type 2 subfamily. In terms of assembly, tetramer of two alpha and two beta subunits. Mg(2+) is required as a cofactor.

Its subcellular location is the cytoplasm. It carries out the reaction tRNA(Phe) + L-phenylalanine + ATP = L-phenylalanyl-tRNA(Phe) + AMP + diphosphate + H(+). This is Probable phenylalanine--tRNA ligase beta subunit from Vairimorpha ceranae (strain BRL01) (Microsporidian parasite).